Consider the following 261-residue polypeptide: Imidazole glycerol phosphate synthase subunit HisF (261 aa).

Residues Asp12 and Asp131 contribute to the active site.

Belongs to the HisA/HisF family. In terms of assembly, heterodimer of HisH and HisF.

The protein resides in the cytoplasm. It catalyses the reaction 5-[(5-phospho-1-deoxy-D-ribulos-1-ylimino)methylamino]-1-(5-phospho-beta-D-ribosyl)imidazole-4-carboxamide + L-glutamine = D-erythro-1-(imidazol-4-yl)glycerol 3-phosphate + 5-amino-1-(5-phospho-beta-D-ribosyl)imidazole-4-carboxamide + L-glutamate + H(+). The protein operates within amino-acid biosynthesis; L-histidine biosynthesis; L-histidine from 5-phospho-alpha-D-ribose 1-diphosphate: step 5/9. IGPS catalyzes the conversion of PRFAR and glutamine to IGP, AICAR and glutamate. The HisF subunit catalyzes the cyclization activity that produces IGP and AICAR from PRFAR using the ammonia provided by the HisH subunit. This Brucella abortus (strain S19) protein is Imidazole glycerol phosphate synthase subunit HisF.